The chain runs to 419 residues: NF-kappa-B essential modulator (419 aa).

The tract at residues 1-197 (MNRHLWKSQL…REALQQQHSV (197 aa)) is required for interaction with and ubiquitination by MARCHF2. 2 positions are modified to phosphoserine; by IKKB: Ser-31 and Ser-43. The interaction with CHUK/IKBKB stretch occupies residues 44–111 (EQGAPETLQR…KLVERLGLEK (68 aa)). Residues 49-356 (ETLQRCLEEN…CQESARIEDM (308 aa)) are a coiled coil. Ser-68 bears the Phosphoserine mark. Phosphoserine; by ATM is present on Ser-85. Residues Lys-111, Lys-139, Lys-143, Lys-226, Lys-246, and Lys-264 each participate in a glycyl lysine isopeptide (Lys-Gly) (interchain with G-Cter in ubiquitin) cross-link. Residues 150–257 (LGELQESQSR…SVVGSERKRG (108 aa)) are interaction with TANK. The segment at 242–350 (DNHIKSSVVG…SKLKASCQES (109 aa)) is ubiquitin-binding (UBAN). The segment at 246–365 (KSSVVGSERK…MRKRHVEVSQ (120 aa)) is self-association. The required for interaction with TNFAIP3 stretch occupies residues 251 to 419 (GSERKRGMQL…LQIHVMECIE (169 aa)). Residue Lys-277 forms a Glycyl lysine isopeptide (Lys-Gly) (interchain with G-Cter in SUMO); alternate linkage. A Glycyl lysine isopeptide (Lys-Gly) (interchain with G-Cter in ubiquitin); alternate cross-link involves residue Lys-277. Glycyl lysine isopeptide (Lys-Gly) (interchain with G-Cter in ubiquitin) cross-links involve residues Lys-283, Lys-285, Lys-292, and Lys-302. Lys-309 is covalently cross-linked (Glycyl lysine isopeptide (Lys-Gly) (interchain with G-Cter in SUMO); alternate). Residue Lys-309 forms a Glycyl lysine isopeptide (Lys-Gly) (interchain with G-Cter in ubiquitin); alternate linkage. Residues Lys-321 and Lys-325 each participate in a glycyl lysine isopeptide (Lys-Gly) (interchain with G-Cter in ubiquitin) cross-link. Residues 322–343 (LAEKKELLQEQLEQLQREYSKL) form a leucine-zipper region. Residue Lys-326 forms a Glycyl lysine isopeptide (Lys-Gly) (interchain with G-Cter in ubiquitin and interchain with MARCHF2) linkage. Residues 358-395 (KRHVEVSQAPLPPAPAYLSSPLALPSQRRSPPEEPPDF) are disordered. Low complexity predominate over residues 373-386 (AYLSSPLALPSQRR). Phosphoserine; by IKKB is present on Ser-376. The interval 382-419 (PSQRRSPPEEPPDFCCPKCQYQAPDMDTLQIHVMECIE) is interaction with CYLD. Phosphoserine is present on Ser-387. The segment at 389 to 419 (PEEPPDFCCPKCQYQAPDMDTLQIHVMECIE) adopts a CCHC NOA-type zinc-finger fold. A Zn(2+)-binding site is contributed by Cys-397. Lys-399 participates in a covalent cross-link: Glycyl lysine isopeptide (Lys-Gly) (interchain with G-Cter in ubiquitin). Zn(2+) contacts are provided by Cys-400, His-413, and Cys-417.

In terms of assembly, homodimer; disulfide-linked. Component of the I-kappa-B-kinase (IKK) core complex consisting of CHUK, IKBKB and IKBKG; probably four alpha/CHUK-beta/IKBKB dimers are associated with four gamma/IKBKG subunits. The IKK core complex seems to associate with regulatory or adapter proteins to form a IKK-signalosome holo-complex. The IKK complex associates with TERF2IP/RAP1, leading to promote IKK-mediated phosphorylation of RELA/p65. Part of a complex composed of NCOA2, NCOA3, CHUK/IKKA, IKBKB, IKBKG and CREBBP. Interacts with COPS3, CYLD, NALP2, TRPC4AP and PIDD1. Interacts with ATM; the complex is exported from the nucleus. Interacts with TRAF6. Interacts with IKBKE. Interacts with TANK; the interaction is enhanced by IKBKE and TBK1. Part of a ternary complex consisting of TANK, IKBKB and IKBKG. Interacts with ZFAND5. Interacts with RIPK2. Interacts with TNIP1 and TNFAIP3; TNIP1 facilitates the TNFAIP3-mediated de-ubiquitination of IKBKG. Interacts with TNFAIP3; the interaction is induced by TNF stimulation and by polyubiquitin. Binds (via UBAN region) polyubiquitin; binds both 'Lys-63'-linked and linear polyubiquitin, with higher affinity for linear ubiquitin. Interacts with NLRP10. Interacts with TANK; this interaction increases in response to DNA damage. Interacts with USP10; this interaction increases in response to DNA damage. Interacts with ZC3H12A; this interaction increases in response to DNA damage. Interacts with IFIT5; the interaction synergizes the recruitment of IKK to MAP3K7 and enhances IKK phosphorylation. Interacts with TRIM29; this interaction induces IKBKG/NEMO ubiquitination and proteolytic degradation. Interacts with TRIM13; this interaction leads to IKBKG/NEMO ubiquitination. Interacts with ARFIP2. Interacts with RIPK1. Interacts with (ubiquitinated) BCL10; interaction with polyubiquitinated BCL10 via both 'Lys-63'-linked and linear ubiquitin is required for TCR-induced NF-kappa-B activation. Interacts with MARCHF2; during the late stages of macrophage viral and bacterial infection; the interaction leads to ubiquitination and degradation of IKBKG/NEMO. As to quaternary structure, (Microbial infection) Interacts with Molluscum contagiosum virus protein MC005; this interaction inhibits NF-kappa-B activation. (Microbial infection) Interacts with HTLV-1 Tax oncoprotein; the interaction activates IKBKG. In terms of assembly, (Microbial infection) Interacts with Shigella flexneri ipah9.8; the interaction promotes TNIP1-dependent 'Lys-27'-linked polyubiquitination of IKBKG which perturbs NF-kappa-B activation during bacterial infection. As to quaternary structure, (Microbial infection) Interacts with SARS coronavirus-2/SARS-CoV-2 virus protein ORF9B (via N-terminus); the interaction inhibits polyubiquitination through 'Lys-63' and NF-kappa-B activation. Phosphorylation at Ser-68 attenuates aminoterminal homodimerization. Post-translationally, polyubiquitinated on Lys-285 via 'Lys-63'-linked ubiquitin; the ubiquitination is mediated downstream of NOD2 and RIPK2 and probably plays a role in signaling by facilitating interactions with ubiquitin domain-containing proteins and activates the NF-kappa-B pathway. Polyubiquitinated on Lys-285 and Lys-399 through 'Lys-63'-linked ubiquitin; the ubiquitination is mediated by BCL10, MALT1 and TRAF6 and probably plays a role in signaling by facilitating interactions with ubiquitin domain-containing proteins and activates the NF-kappa-B pathway. Monoubiquitinated on Lys-277 and Lys-309; promotes nuclear export. Polyubiquitinated through 'Lys-27' by TRIM23; involved in antiviral innate and inflammatory responses. Linear polyubiquitinated on Lys-111, Lys-143, Lys-226, Lys-246, Lys-264, Lys-277, Lys-285, Lys-292, Lys-302, Lys-309 and Lys-326; the head-to-tail polyubiquitination is mediated by the LUBAC complex and plays a key role in NF-kappa-B activation. Deubiquitinated by USP10 in a TANK-dependent and -independent manner, leading to the negative regulation of NF-kappa-B signaling upon DNA damage. Ubiquitinated at Lys-326 by MARCHF2 following bacterial and viral infection which leads to its degradation. Polyubiquitinated via 'Lys-29'-linked ubiquitin; leading to lysosomal degradation. In terms of processing, sumoylated on Lys-277 and Lys-309 with SUMO1; the modification results in phosphorylation of Ser-85 by ATM leading to a replacement of the sumoylation by mono-ubiquitination on these residues. Neddylated by TRIM40, resulting in stabilization of NFKBIA and down-regulation of NF-kappa-B activity. Post-translationally, (Microbial infection) Cleaved by hepatitis A virus (HAV) protease 3C allowing the virus to disrupt the host innate immune signaling. In terms of processing, (Microbial infection) Deubiquitinated by Epstein-Barr virus BPLF1 on both 'Lys-48' and 'Lys-63'-linked ubiquitin chains; leading to NF-kappa-B signaling inhibition. (Microbial infection) Polyubiquitinated on Lys-309 and Lys-321 via 'Lys-27'-linked ubiquitin by Shigella flexneri E3 ubiquitin-protein ligase ipah9.8, leading to its degradation by the proteasome. Post-translationally, (Microbial infection) Polyubiquitination through 'Lys-63' is interrupted by interaction with SARS coronavirus-2/SARS-CoV-2 virus protein ORF9B which inhibits the NF-kappa-B pathway. As to expression, heart, brain, placenta, lung, liver, skeletal muscle, kidney and pancreas.

Its subcellular location is the cytoplasm. The protein localises to the nucleus. Functionally, regulatory subunit of the IKK core complex which phosphorylates inhibitors of NF-kappa-B thus leading to the dissociation of the inhibitor/NF-kappa-B complex and ultimately the degradation of the inhibitor. Its binding to scaffolding polyubiquitin plays a key role in IKK activation by multiple signaling receptor pathways. Can recognize and bind both 'Lys-63'-linked and linear polyubiquitin upon cell stimulation, with a much higher affinity for linear polyubiquitin. Could be implicated in NF-kappa-B-mediated protection from cytokine toxicity. Essential for viral activation of IRF3. Involved in TLR3- and IFIH1-mediated antiviral innate response; this function requires 'Lys-27'-linked polyubiquitination. In terms of biological role, (Microbial infection) Also considered to be a mediator for HTLV-1 Tax oncoprotein activation of NF-kappa-B. This is NF-kappa-B essential modulator from Homo sapiens (Human).